Consider the following 5233-residue polypeptide: E3 ubiquitin-protein ligase highwire (5233 aa).

Residues 197–230 form a disordered region; it reads VVGGPGLPAEKRPRRDSANSDADSDTEEPTEREP. The segment covering 205–214 has biased composition (basic and acidic residues); it reads AEKRPRRDSA. Residues serine 213 and serine 216 each carry the phosphoserine modification. RCC1 repeat units lie at residues 615–666, 669–724, and 768–818; these read NGRV…ALLV, DGTV…FVTK, and KGQL…DKRL. The interval 680–700 is disordered; the sequence is RGEDGDSSKNRRQPKAVKPKK. Residues 689-700 are compositionally biased toward basic residues; it reads NRRQPKAVKPKK. The interval 900–950 is disordered; sequence TELKPPPSDVQQRQQRSKTLIMRRKERKGELETGAAGGGAATPTDLDKDPP. The span at 908 to 917 shows a compositional bias: polar residues; the sequence is DVQQRQQRSK. RCC1 repeat units follow at residues 931-983, 984-1033, and 1035-1084; these read ETGA…VLTL, AGEV…LLTS, and GMVY…TVAP. Disordered stretches follow at residues 1051 to 1109 and 1287 to 1327; these read LPSD…EMPP and AAAA…PPQL. Polar residues predominate over residues 1092–1103; that stretch reads RSQSPANVQPSG. Positions 1287–1302 are enriched in low complexity; that stretch reads AAAAAVAAPGTPVSAG. Positions 1436-1587 are PHR domain 1; it reads NRFDNFGGGW…GQIPAILYRL (152 aa). Positions 1681 to 1718 are disordered; sequence SSTSVATGGGSNAAHGSGVVTTAKSVQSKPNKDKNTPR. Positions 1699 to 1709 are enriched in polar residues; it reads VVTTAKSVQSK. The interval 2014-2169 is PHR domain 2; it reads ARFARCDVSR…GQLPCILYYS (156 aa). 2 disordered regions span residues 2329-2353 and 2580-2604; these read SADL…VPIN and NGAG…NTHQ. Positions 2336 to 2350 are enriched in low complexity; it reads QSQSVSQSQSQSQSV. The required for interaction with Rae1 stretch occupies residues 2885–4082; it reads AEVSAPGPNL…FVSSLNPTGG (1198 aa). Residues 2906-3000 form a Filamin repeat; that stretch reads WGGMAPPPRI…LEEVYRVDVK (95 aa). 6 disordered regions span residues 3005–3024, 3117–3210, 3277–3333, 3348–3378, 3551–3587, and 3901–3936; these read PPPT…SKLR, KGVG…EPEQ, GGQD…ASET, TTTG…PMGP, PRLL…DLGR, and ASLA…APPV. A compositionally biased stretch (basic and acidic residues) spans 3176–3191; it reads KHADLAEREAQVQEER. Acidic residues predominate over residues 3192–3210; sequence EKEEEQVDDEDADDREPEQ. Positions 3282–3292 are enriched in polar residues; that stretch reads PRGNGNRSQQE. The span at 3348-3371 shows a compositional bias: low complexity; it reads TTTGQGEQQSELQLATTSTASSAS. Low complexity predominate over residues 3917–3932; the sequence is QHHQQQQMNLQLQQHQ. The DOC domain maps to 4195 to 4374; the sequence is HNQVHSVATG…KHQPHLRLSH (180 aa). Disordered regions lie at residues 4633–4655 and 4680–4702; these read ASTG…GAVL and LRSR…ALPP. Over residues 4638–4652 the composition is skewed to gly residues; sequence SGSGGVSGSSSGNGG. Cysteine 4991, cysteine 4994, cysteine 5009, histidine 5011, histidine 5014, cysteine 5017, cysteine 5038, cysteine 5041, cysteine 5101, and cysteine 5104 together coordinate Zn(2+). An RING-type; atypical zinc finger spans residues 4991–5042; sequence CMICFVEALSCAPSIHLECGHVFHYHCCKAVLEKRWSGPRITFGFSLCPICK. The interval 5096-5231 is tandem cysteine domain; it reads YAYYVCFKCQ…LGCGVCRNAQ (136 aa). Cysteine 5115 is a catalytic residue. Cysteine 5130, cysteine 5133, cysteine 5142, histidine 5145, cysteine 5154, cysteine 5157, and cysteine 5158 together coordinate Zn(2+). Cysteine 5165 is a catalytic residue. Positions 5172, 5175, 5193, 5207, 5213, 5224, and 5227 each coordinate Zn(2+).

Belongs to the RING-Cys relay (RCR) family. In terms of assembly, component of an E3 ubiquitin ligase complex composed of hiw, Rae1 and Fsn. Interacts with Rae1; the interaction with Rae1 may protect hiw from autophagy-mediated degradation. As to expression, express throughout the nervous system. Stage 13 embryos show expression in the central nervous system (CNS) at the longitudinal axon tracts around which the synaptic neuropil forms. Expression outside the CNS starts at stage 16 in presynaptic terminals at the periactive zone which surround the active zone. Expression at neuromuscular junctions (NMJ) and in the CNS is also seen in third instar larvae (at protein level).

It is found in the synapse. Its subcellular location is the cell projection. The protein resides in the axon. The catalysed reaction is [E2 ubiquitin-conjugating enzyme]-S-ubiquitinyl-L-cysteine + [acceptor protein]-L-threonine = [E2 ubiquitin-conjugating enzyme]-L-cysteine + [acceptor protein]-3-O-ubiquitinyl-L-threonine.. The protein operates within protein modification; protein ubiquitination. In terms of biological role, atypical E3 ubiquitin-protein ligase which specifically mediates ubiquitination of threonine and serine residues on target proteins, instead of ubiquitinating lysine residues. Shows esterification activity towards both threonine and serine, with a preference for threonine, and acts via two essential catalytic cysteine residues that relay ubiquitin to its substrate via thioester intermediates. Required in the presynaptic motoneuron to down-regulate the levels of wnd and restrain synaptic terminal growth at the neuromuscular junction (NMJ) together with Rae1 and Fsn. This chain is E3 ubiquitin-protein ligase highwire, found in Drosophila melanogaster (Fruit fly).